We begin with the raw amino-acid sequence, 591 residues long: V-type ATP synthase alpha chain (591 aa).

232–239 (GPFGAGKT) is a binding site for ATP.

The protein belongs to the ATPase alpha/beta chains family.

The enzyme catalyses ATP + H2O + 4 H(+)(in) = ADP + phosphate + 5 H(+)(out). Functionally, produces ATP from ADP in the presence of a proton gradient across the membrane. The V-type alpha chain is a catalytic subunit. The chain is V-type ATP synthase alpha chain from Nitrosococcus oceani (strain ATCC 19707 / BCRC 17464 / JCM 30415 / NCIMB 11848 / C-107).